Here is a 476-residue protein sequence, read N- to C-terminus: ATP synthase subunit beta, chloroplastic (476 aa).

Position 155-162 (155-162 (GGAGVGKT)) interacts with ATP.

The protein belongs to the ATPase alpha/beta chains family. In terms of assembly, F-type ATPases have 2 components, CF(1) - the catalytic core - and CF(0) - the membrane proton channel. CF(1) has five subunits: alpha(3), beta(3), gamma(1), delta(1), epsilon(1). CF(0) has four main subunits: a(1), b(1), b'(1) and c(9-12).

It localises to the plastid. The protein localises to the chloroplast thylakoid membrane. It carries out the reaction ATP + H2O + 4 H(+)(in) = ADP + phosphate + 5 H(+)(out). Produces ATP from ADP in the presence of a proton gradient across the membrane. The catalytic sites are hosted primarily by the beta subunits. This Emiliania huxleyi (Coccolithophore) protein is ATP synthase subunit beta, chloroplastic.